A 153-amino-acid chain; its full sequence is Pheromone-binding protein Gp-9 (153 aa).

Positions 1–19 (MKTFVLHIFIFALVAFASA) are cleaved as a signal peptide. 3 disulfides stabilise this stretch: C37/C77, C73/C129, and C118/C138.

This sequence belongs to the PBP/GOBP family. Homodimer.

The protein localises to the secreted. Functionally, colony queen number, a major feature of social organization, is associated with worker genotype for Gp-9. Colonies are headed by either a single reproductive queen (monogyne form) or multiple queens (polygyne form). Differences in worker Gp-9 genotypes between social forms may cause differences in workers' abilities to recognize queens and regulate their numbers. This is Pheromone-binding protein Gp-9 from Solenopsis saevissima (Fire ant).